Here is a 345-residue protein sequence, read N- to C-terminus: D-apiose dehydrogenase (345 aa).

15–16 (FF) is an NAD(+) binding site. Positions 24, 25, 27, and 30 each coordinate Mg(2+). Residues D37, S79, 97 to 98 (QK), N126, and 165 to 167 (QPY) each bind NAD(+). K98 serves as a coordination point for substrate. Substrate contacts are provided by Q165, D178, H182, and Y232.

The protein belongs to the Gfo/Idh/MocA family.

The enzyme catalyses D-apiofuranose + NAD(+) = D-apionolactone + NADH + H(+). It functions in the pathway carbohydrate metabolism. In terms of biological role, involved in catabolism of D-apiose. Catalyzes oxidation of D-apiose to D-apionolactone. The sequence is that of D-apiose dehydrogenase from Rhizobium rhizogenes (strain K84 / ATCC BAA-868) (Agrobacterium radiobacter).